A 457-amino-acid polypeptide reads, in one-letter code: Transmembrane protein 143 (457 aa).

2 consecutive transmembrane segments (helical) span residues I264 to V284 and L285 to L305. S316 carries the phosphoserine modification. The segment covering L429–D439 has biased composition (polar residues). The interval L429–N457 is disordered.

It is found in the membrane. This Bos taurus (Bovine) protein is Transmembrane protein 143 (TMEM143).